Consider the following 412-residue polypeptide: Chorismate synthase (412 aa).

2 residues coordinate NADP(+): arginine 40 and arginine 46. Residues 135–137 (RAS), 256–257 (QA), glycine 300, 315–319 (KPIST), and arginine 341 each bind FMN. A compositionally biased stretch (basic and acidic residues) spans 391–404 (QREPRQESSDEQPA). The tract at residues 391–412 (QREPRQESSDEQPARRAANTAG) is disordered.

It belongs to the chorismate synthase family. Homotetramer. The cofactor is FMNH2.

It catalyses the reaction 5-O-(1-carboxyvinyl)-3-phosphoshikimate = chorismate + phosphate. It functions in the pathway metabolic intermediate biosynthesis; chorismate biosynthesis; chorismate from D-erythrose 4-phosphate and phosphoenolpyruvate: step 7/7. In terms of biological role, catalyzes the anti-1,4-elimination of the C-3 phosphate and the C-6 proR hydrogen from 5-enolpyruvylshikimate-3-phosphate (EPSP) to yield chorismate, which is the branch point compound that serves as the starting substrate for the three terminal pathways of aromatic amino acid biosynthesis. This reaction introduces a second double bond into the aromatic ring system. The polypeptide is Chorismate synthase (Mycobacteroides abscessus (strain ATCC 19977 / DSM 44196 / CCUG 20993 / CIP 104536 / JCM 13569 / NCTC 13031 / TMC 1543 / L948) (Mycobacterium abscessus)).